The sequence spans 89 residues: MYNVDIKKNIRIKQGRVVSNKMDKSIVVAIERIIKHPIYGKYIKRTTKIHAHDENNACNIGDLIEIKECRPISKTKSWILIRIIEKAIC.

The protein belongs to the universal ribosomal protein uS17 family. As to quaternary structure, part of the 30S ribosomal subunit.

Functionally, one of the primary rRNA binding proteins, it binds specifically to the 5'-end of 16S ribosomal RNA. The protein is Small ribosomal subunit protein uS17 of Baumannia cicadellinicola subsp. Homalodisca coagulata.